Here is a 190-residue protein sequence, read N- to C-terminus: Ribosome maturation factor RimP (190 aa).

Positions 159–190 are disordered; that stretch reads ELELAGGIPEGRVAPADADASEDEEVVEGLDK. A compositionally biased stretch (acidic residues) spans 177-190; sequence DASEDEEVVEGLDK.

This sequence belongs to the RimP family.

It localises to the cytoplasm. Required for maturation of 30S ribosomal subunits. The sequence is that of Ribosome maturation factor RimP from Rhodococcus opacus (strain B4).